The sequence spans 139 residues: ATP synthase epsilon chain (139 aa).

The disordered stretch occupies residues 89–110 (EARAEQARAEAEARRREAQSER).

This sequence belongs to the ATPase epsilon chain family. As to quaternary structure, F-type ATPases have 2 components, CF(1) - the catalytic core - and CF(0) - the membrane proton channel. CF(1) has five subunits: alpha(3), beta(3), gamma(1), delta(1), epsilon(1). CF(0) has three main subunits: a, b and c.

Its subcellular location is the cell membrane. Functionally, produces ATP from ADP in the presence of a proton gradient across the membrane. This chain is ATP synthase epsilon chain, found in Chloroflexus aurantiacus (strain ATCC 29366 / DSM 635 / J-10-fl).